Consider the following 253-residue polypeptide: Ubiquinone/menaquinone biosynthesis C-methyltransferase UbiE (253 aa).

S-adenosyl-L-methionine contacts are provided by residues Thr-76, Asp-97, and 125-126; that span reads NA.

The protein belongs to the class I-like SAM-binding methyltransferase superfamily. MenG/UbiE family.

It carries out the reaction a 2-demethylmenaquinol + S-adenosyl-L-methionine = a menaquinol + S-adenosyl-L-homocysteine + H(+). It catalyses the reaction a 2-methoxy-6-(all-trans-polyprenyl)benzene-1,4-diol + S-adenosyl-L-methionine = a 5-methoxy-2-methyl-3-(all-trans-polyprenyl)benzene-1,4-diol + S-adenosyl-L-homocysteine + H(+). Its pathway is quinol/quinone metabolism; menaquinone biosynthesis; menaquinol from 1,4-dihydroxy-2-naphthoate: step 2/2. It functions in the pathway cofactor biosynthesis; ubiquinone biosynthesis. Functionally, methyltransferase required for the conversion of demethylmenaquinol (DMKH2) to menaquinol (MKH2) and the conversion of 2-polyprenyl-6-methoxy-1,4-benzoquinol (DDMQH2) to 2-polyprenyl-3-methyl-6-methoxy-1,4-benzoquinol (DMQH2). The chain is Ubiquinone/menaquinone biosynthesis C-methyltransferase UbiE from Nitrobacter hamburgensis (strain DSM 10229 / NCIMB 13809 / X14).